The primary structure comprises 284 residues: Pantothenate synthetase (284 aa).

30-37 (MGNLHDGH) contributes to the ATP binding site. The active-site Proton donor is histidine 37. Residue glutamine 61 participates in (R)-pantoate binding. Glutamine 61 lines the beta-alanine pocket. Residue 149 to 152 (GEKD) participates in ATP binding. A (R)-pantoate-binding site is contributed by glutamine 155. ATP contacts are provided by residues isoleucine 178 and 186–189 (LSSR).

This sequence belongs to the pantothenate synthetase family. As to quaternary structure, homodimer.

It is found in the cytoplasm. The enzyme catalyses (R)-pantoate + beta-alanine + ATP = (R)-pantothenate + AMP + diphosphate + H(+). The protein operates within cofactor biosynthesis; (R)-pantothenate biosynthesis; (R)-pantothenate from (R)-pantoate and beta-alanine: step 1/1. Functionally, catalyzes the condensation of pantoate with beta-alanine in an ATP-dependent reaction via a pantoyl-adenylate intermediate. The polypeptide is Pantothenate synthetase (Salmonella typhi).